The sequence spans 225 residues: Nucleolar protein 6 (225 aa).

Positions 1-75 (MGSEEDKKLT…GGKGKNGKKG (75 aa)) are disordered. Positions 9 to 20 (LTKKQLKAQQFR) are enriched in basic residues. Basic and acidic residues predominate over residues 21–42 (KSKEEKDQEKDVKKEQAPEGKR). A Phosphoserine modification is found at serine 45. The span at 56–75 (KKKRKTRRGRGGKGKNGKKG) shows a compositional bias: basic residues. The 78-residue stretch at 78–155 (FIVFVGSLPR…KKINVELTVG (78 aa)) folds into the RRM domain. Serine 160 carries the phosphoserine modification. The segment at 187–225 (NDGNQKKIAKTTATAAQTSGTDNKPVPAGIHPDRAKLLK) is disordered.

Belongs to the RRM NOP6 family.

The protein localises to the nucleus. It localises to the nucleolus. Its function is as follows. Predicted to be involved in rRNA processing. The sequence is that of Nucleolar protein 6 (NOP6) from Saccharomyces cerevisiae (strain ATCC 204508 / S288c) (Baker's yeast).